A 500-amino-acid chain; its full sequence is Betaine aldehyde dehydrogenase, chloroplastic (500 aa).

The N-terminal 7 residues, 1–7, are a transit peptide targeting the chloroplast; that stretch reads MSMPIPS. Residue 238–243 participates in NAD(+) binding; that stretch reads GSSATG. Glu260 acts as the Proton acceptor in catalysis. Catalysis depends on Cys294, which acts as the Nucleophile.

The protein belongs to the aldehyde dehydrogenase family. In terms of assembly, homodimer.

The protein resides in the plastid. The protein localises to the chloroplast. It catalyses the reaction betaine aldehyde + NAD(+) + H2O = glycine betaine + NADH + 2 H(+). The protein operates within amine and polyamine biosynthesis; betaine biosynthesis via choline pathway; betaine from betaine aldehyde: step 1/1. This Beta vulgaris (Sugar beet) protein is Betaine aldehyde dehydrogenase, chloroplastic.